We begin with the raw amino-acid sequence, 147 residues long: SsrA-binding protein (147 aa).

It belongs to the SmpB family.

It is found in the cytoplasm. Required for rescue of stalled ribosomes mediated by trans-translation. Binds to transfer-messenger RNA (tmRNA), required for stable association of tmRNA with ribosomes. tmRNA and SmpB together mimic tRNA shape, replacing the anticodon stem-loop with SmpB. tmRNA is encoded by the ssrA gene; the 2 termini fold to resemble tRNA(Ala) and it encodes a 'tag peptide', a short internal open reading frame. During trans-translation Ala-aminoacylated tmRNA acts like a tRNA, entering the A-site of stalled ribosomes, displacing the stalled mRNA. The ribosome then switches to translate the ORF on the tmRNA; the nascent peptide is terminated with the 'tag peptide' encoded by the tmRNA and targeted for degradation. The ribosome is freed to recommence translation, which seems to be the essential function of trans-translation. The sequence is that of SsrA-binding protein from Mycoplasmopsis agalactiae (strain NCTC 10123 / CIP 59.7 / PG2) (Mycoplasma agalactiae).